We begin with the raw amino-acid sequence, 836 residues long: Protein AKNAD1 (836 aa).

Composition is skewed to polar residues over residues S159–L172, S181–E192, and S227–K248. Disordered stretches follow at residues S159–K248 and L303–E325. Residues C311 to I323 are compositionally biased toward basic and acidic residues. Positions Q372 to K484 form a coiled coil. 2 disordered regions span residues S510–N545 and M575–E596.

Belongs to the AKNA family.

The sequence is that of Protein AKNAD1 (AKNAD1) from Homo sapiens (Human).